A 348-amino-acid chain; its full sequence is Ribonuclease H (348 aa).

The span at 54–65 (NTTSNYGSSTHA) shows a compositional bias: polar residues. The disordered stretch occupies residues 54–81 (NTTSNYGSSTHAGGQVSKPHTTQKRVHR). Residues 184–346 (YNKSMNVYCD…ADFLAKKGAS (163 aa)) form the RNase H type-1 domain. The Mg(2+) site is built by Asp193, Glu235, Asp264, and Asp338.

Belongs to the RNase H family. Requires Mg(2+) as cofactor.

It carries out the reaction Endonucleolytic cleavage to 5'-phosphomonoester.. Its function is as follows. Endonuclease that specifically degrades the RNA of RNA-DNA hybrids. The chain is Ribonuclease H (RNH1) from Saccharomyces cerevisiae (strain ATCC 204508 / S288c) (Baker's yeast).